Reading from the N-terminus, the 514-residue chain is Lysine--tRNA ligase (514 aa).

Mg(2+) contacts are provided by Glu-422 and Glu-429.

It belongs to the class-II aminoacyl-tRNA synthetase family. As to quaternary structure, homodimer. It depends on Mg(2+) as a cofactor.

It localises to the cytoplasm. The catalysed reaction is tRNA(Lys) + L-lysine + ATP = L-lysyl-tRNA(Lys) + AMP + diphosphate. The protein is Lysine--tRNA ligase of Psychrobacter arcticus (strain DSM 17307 / VKM B-2377 / 273-4).